Consider the following 299-residue polypeptide: tRNA pseudouridine synthase B (299 aa).

The active-site Nucleophile is the Asp-38.

It belongs to the pseudouridine synthase TruB family. Type 1 subfamily.

The enzyme catalyses uridine(55) in tRNA = pseudouridine(55) in tRNA. In terms of biological role, responsible for synthesis of pseudouridine from uracil-55 in the psi GC loop of transfer RNAs. This Alkaliphilus oremlandii (strain OhILAs) (Clostridium oremlandii (strain OhILAs)) protein is tRNA pseudouridine synthase B.